The following is a 968-amino-acid chain: RNA polymerase-associated protein RapA (968 aa).

The region spanning 164–334 is the Helicase ATP-binding domain; the sequence is EVGQRHAPRV…FARLRLLDPD (171 aa). ATP is bound at residue 177 to 184; sequence DEVGLGKT. Positions 280 to 283 match the DEAH box motif; that stretch reads DEAH. One can recognise a Helicase C-terminal domain in the interval 490–644; sequence RVEWLLNYLV…TCPTGRTIYD (155 aa).

This sequence belongs to the SNF2/RAD54 helicase family. RapA subfamily. Interacts with the RNAP. Has a higher affinity for the core RNAP than for the holoenzyme. Its ATPase activity is stimulated by binding to RNAP.

Transcription regulator that activates transcription by stimulating RNA polymerase (RNAP) recycling in case of stress conditions such as supercoiled DNA or high salt concentrations. Probably acts by releasing the RNAP, when it is trapped or immobilized on tightly supercoiled DNA. Does not activate transcription on linear DNA. Probably not involved in DNA repair. The chain is RNA polymerase-associated protein RapA from Yersinia pestis bv. Antiqua (strain Antiqua).